Reading from the N-terminus, the 301-residue chain is Hydroxymycolate synthase MmaA4 (301 aa).

S-adenosyl-L-methionine is bound by residues 42 to 43 (YS), 81 to 83 (GCG), 103 to 108 (TLSKNQ), 132 to 133 (WE), and I145. The active site involves C278.

The protein belongs to the CFA/CMAS family. Monomer.

Its pathway is lipid metabolism; mycolic acid biosynthesis. With respect to regulation, inhibited by S-adenosyl-N-decyl-aminoethyl (SADAE). Functionally, involved in the biosynthesis of hydroxymycolate, a common precursor of oxygenated mycolic acids (methoxy-mycolate and keto-mycolate). Probably transfers a methyl group from the S-adenosylmethionine (SAM) cofactor and, subsequently or simultaneously, a water molecule onto the double bound of ethylene substrates, leading to the formation of the hydroxylated product at the distal position. Involved in the activation of the antitubercular drug thiacetazone (TAC). The polypeptide is Hydroxymycolate synthase MmaA4 (mmaA4) (Mycobacterium tuberculosis (strain ATCC 25618 / H37Rv)).